The following is a 132-amino-acid chain: Fatty acid-binding protein 1 (132 aa).

A2 bears the N-acetylalanine mark.

It belongs to the calycin superfamily. Fatty-acid binding protein (FABP) family.

This Fasciola gigantica (Giant liver fluke) protein is Fatty acid-binding protein 1 (FABP-1).